We begin with the raw amino-acid sequence, 279 residues long: Tryptophan synthase alpha chain (279 aa).

Catalysis depends on proton acceptor residues E49 and D60.

Belongs to the TrpA family. In terms of assembly, tetramer of two alpha and two beta chains.

The catalysed reaction is (1S,2R)-1-C-(indol-3-yl)glycerol 3-phosphate + L-serine = D-glyceraldehyde 3-phosphate + L-tryptophan + H2O. It functions in the pathway amino-acid biosynthesis; L-tryptophan biosynthesis; L-tryptophan from chorismate: step 5/5. The alpha subunit is responsible for the aldol cleavage of indoleglycerol phosphate to indole and glyceraldehyde 3-phosphate. The protein is Tryptophan synthase alpha chain of Nitrosospira multiformis (strain ATCC 25196 / NCIMB 11849 / C 71).